A 260-amino-acid polypeptide reads, in one-letter code: Uroplakin-1b (260 aa).

The Cytoplasmic portion of the chain corresponds to 1–15 (MAKDDSTVRCFQGLL). A helical membrane pass occupies residues 16 to 36 (IFGHVIVGMCGIALTAECIFF). Residues 37–59 (VSDQHSLYPLLEATNNDDIFGAA) lie on the Extracellular side of the membrane. The chain crosses the membrane as a helical span at residues 60–80 (WIGMFVGICLFCLSVLAIVGI). Topologically, residues 81–86 (MKSNRK) are cytoplasmic. The helical transmembrane segment at 87–107 (ILLAYFIMMFIVYGFEVASCI) threads the bilayer. Residues 108-229 (TAATQRDFFT…ELISGPMDRH (122 aa)) are Extracellular-facing. A helical membrane pass occupies residues 230 to 250 (AWGVAWFGFAILCWTFWVLLG). Residues 251–260 (TMFYWSRIEY) are Cytoplasmic-facing.

Belongs to the tetraspanin (TM4SF) family. As to quaternary structure, heterodimer with uroplakin-3A (UPK3A) or uroplakin-3B (UPK3B). N-glycosylated with high-mannose oligosaccharides. In terms of tissue distribution, bladder epithelium.

The protein resides in the membrane. In terms of biological role, component of the asymmetric unit membrane (AUM); a highly specialized biomembrane elaborated by terminally differentiated urothelial cells. May play an important role in normal bladder epithelial physiology, possibly in regulating membrane permeability of superficial umbrella cells or in stabilizing the apical membrane through AUM/cytoskeletal interactions. This is Uroplakin-1b (Upk1b) from Mus musculus (Mouse).